The chain runs to 423 residues: Protein CLP1 homolog (423 aa).

ATP contacts are provided by residues Glu-19, Lys-60, and 122–127; that span reads DVGKTT.

It belongs to the Clp1 family. Clp1 subfamily.

The protein localises to the nucleus. Its function is as follows. Required for endonucleolytic cleavage during polyadenylation-dependent pre-mRNA 3'-end formation. This is Protein CLP1 homolog (cbc) from Anopheles gambiae (African malaria mosquito).